The primary structure comprises 119 residues: Large ribosomal subunit protein bL20 (119 aa).

It belongs to the bacterial ribosomal protein bL20 family.

Its function is as follows. Binds directly to 23S ribosomal RNA and is necessary for the in vitro assembly process of the 50S ribosomal subunit. It is not involved in the protein synthesizing functions of that subunit. This is Large ribosomal subunit protein bL20 from Nitrosospira multiformis (strain ATCC 25196 / NCIMB 11849 / C 71).